A 360-amino-acid chain; its full sequence is Phenylalanine--tRNA ligase alpha subunit (360 aa).

Mg(2+) is bound at residue Glu-260.

This sequence belongs to the class-II aminoacyl-tRNA synthetase family. Phe-tRNA synthetase alpha subunit type 1 subfamily. Tetramer of two alpha and two beta subunits. Mg(2+) is required as a cofactor.

The protein resides in the cytoplasm. It catalyses the reaction tRNA(Phe) + L-phenylalanine + ATP = L-phenylalanyl-tRNA(Phe) + AMP + diphosphate + H(+). The chain is Phenylalanine--tRNA ligase alpha subunit from Rhizobium rhizogenes (strain K84 / ATCC BAA-868) (Agrobacterium radiobacter).